Here is a 507-residue protein sequence, read N- to C-terminus: Probable cytosol aminopeptidase (507 aa).

Residues Lys-271 and Asp-276 each contribute to the Mn(2+) site. Residue Lys-283 is part of the active site. Residues Asp-294, Asp-353, and Glu-355 each contribute to the Mn(2+) site. Residue Arg-357 is part of the active site.

Belongs to the peptidase M17 family. It depends on Mn(2+) as a cofactor.

The protein localises to the cytoplasm. The catalysed reaction is Release of an N-terminal amino acid, Xaa-|-Yaa-, in which Xaa is preferably Leu, but may be other amino acids including Pro although not Arg or Lys, and Yaa may be Pro. Amino acid amides and methyl esters are also readily hydrolyzed, but rates on arylamides are exceedingly low.. The enzyme catalyses Release of an N-terminal amino acid, preferentially leucine, but not glutamic or aspartic acids.. Functionally, presumably involved in the processing and regular turnover of intracellular proteins. Catalyzes the removal of unsubstituted N-terminal amino acids from various peptides. This is Probable cytosol aminopeptidase from Nitratidesulfovibrio vulgaris (strain ATCC 29579 / DSM 644 / CCUG 34227 / NCIMB 8303 / VKM B-1760 / Hildenborough) (Desulfovibrio vulgaris).